A 130-amino-acid chain; its full sequence is Small ribosomal subunit protein uS12c (130 aa).

Belongs to the universal ribosomal protein uS12 family. As to quaternary structure, part of the 30S ribosomal subunit.

The protein resides in the plastid. It is found in the chloroplast. With S4 and S5 plays an important role in translational accuracy. Located at the interface of the 30S and 50S subunits. This is Small ribosomal subunit protein uS12c (rps12) from Tetradesmus obliquus (Green alga).